Here is a 180-residue protein sequence, read N- to C-terminus: Peptide deformylase (180 aa).

2 residues coordinate Fe cation: Cys-88 and His-130. Glu-131 is an active-site residue. His-134 provides a ligand contact to Fe cation.

Belongs to the polypeptide deformylase family. Fe(2+) serves as cofactor.

The catalysed reaction is N-terminal N-formyl-L-methionyl-[peptide] + H2O = N-terminal L-methionyl-[peptide] + formate. In terms of biological role, removes the formyl group from the N-terminal Met of newly synthesized proteins. Requires at least a dipeptide for an efficient rate of reaction. N-terminal L-methionine is a prerequisite for activity but the enzyme has broad specificity at other positions. The chain is Peptide deformylase from Acidothermus cellulolyticus (strain ATCC 43068 / DSM 8971 / 11B).